Reading from the N-terminus, the 256-residue chain is Protein crossbronx-like (256 aa).

Positions 17 to 179 (NQGYQVLAEY…AKASIVWSWK (163 aa)) constitute a UBC core domain.

This sequence belongs to the ubiquitin-conjugating enzyme family. FTS subfamily.

This Drosophila mojavensis (Fruit fly) protein is Protein crossbronx-like.